The following is a 312-amino-acid chain: Testis-expressed protein 13B (312 aa).

This sequence belongs to the TEX13 family. As to expression, testis specific.

The protein is Testis-expressed protein 13B (TEX13B) of Homo sapiens (Human).